Reading from the N-terminus, the 457-residue chain is Adenylosuccinate synthetase isozyme 2 B (457 aa).

Residues 40-46 and 68-70 contribute to the GTP site; these read GDEGKGK and GHT. Asp-41 serves as the catalytic Proton acceptor. Residues Asp-41 and Gly-68 each contribute to the Mg(2+) site. Position 41 (Asp-41) interacts with substrate. Residues 41 to 44, 66 to 69, Thr-163, Arg-177, Asn-256, Thr-271, and Arg-335 each bind IMP; these read DEGK and NAGH. His-69 serves as the catalytic Proton donor. 331-337 contacts substrate; sequence VTTGRKR. GTP contacts are provided by residues Arg-337, 363–365, and 445–448; these read KLD and GVGK.

This sequence belongs to the adenylosuccinate synthetase family. In terms of assembly, homodimer. Mg(2+) is required as a cofactor.

It localises to the cytoplasm. Its subcellular location is the mitochondrion. It catalyses the reaction IMP + L-aspartate + GTP = N(6)-(1,2-dicarboxyethyl)-AMP + GDP + phosphate + 2 H(+). It participates in purine metabolism; AMP biosynthesis via de novo pathway; AMP from IMP: step 1/2. Its activity is regulated as follows. Inhibited competitively by AMP and IMP and non-competitively by fructose 1,6-bisphosphate. Its function is as follows. Plays an important role in the de novo pathway and in the salvage pathway of purine nucleotide biosynthesis. Catalyzes the first committed step in the biosynthesis of AMP from IMP. The polypeptide is Adenylosuccinate synthetase isozyme 2 B (adss2-b) (Xenopus tropicalis (Western clawed frog)).